A 331-amino-acid chain; its full sequence is Serine/threonine-protein phosphatase 6 catalytic subunit (331 aa).

Mn(2+) is bound by residues Asp79, His81, Asp107, and Asn139. The active-site Proton donor is the His140. 2 residues coordinate Mn(2+): His189 and His264.

It belongs to the PPP phosphatase family. PP-6 (PP-V) subfamily. In terms of assembly, forms a complex composed of catalytic subunit pph-6 and regulatory subunit saps-1; the interaction increases pph-6 and saps-1 protein stability. Mn(2+) is required as a cofactor.

It localises to the cytoplasm. It is found in the cell cortex. Its subcellular location is the cytoskeleton. The protein resides in the spindle pole. The catalysed reaction is O-phospho-L-seryl-[protein] + H2O = L-seryl-[protein] + phosphate. The enzyme catalyses O-phospho-L-threonyl-[protein] + H2O = L-threonyl-[protein] + phosphate. Functionally, catalytic subunit of protein phosphatase 6 (PP6). In complex with saps-1, promotes actomyosin contractility during cytokinesis by regulating the organization of cortical non-muscle myosin II nmy-2 and thus contributing to correct spindle positioning. Also required for the proper generation of pulling forces on spindle poles during anaphase by regulating the cortical localization of gpr-1, gpr-2 and lin-5. In Caenorhabditis elegans, this protein is Serine/threonine-protein phosphatase 6 catalytic subunit.